The sequence spans 1139 residues: Ras GTPase-activating protein nGAP (1139 aa).

Residues 1-87 (MQTPEVPAER…SRGLPKLKES (87 aa)) form a disordered region. The residue at position 16 (serine 16) is a Phosphoserine. Over residues 17 to 36 (ISGTSTSEKPNSMDTANTSP) the composition is skewed to polar residues. The PH domain maps to 41 to 158 (GFFSKRLKGS…WMENLRRTVQ (118 aa)). A compositionally biased stretch (basic residues) spans 45 to 56 (KRLKGSIKRTKS). Over residues 73 to 87 (STDDRSRGLPKLKES) the composition is skewed to basic and acidic residues. Phosphoserine is present on serine 89. One can recognise a C2 domain in the interval 149–267 (WMENLRRTVQ…TGRQFVEKWY (119 aa)). The region spanning 343–551 (GRAKDFLTDL…GGMKRFLLEI (209 aa)) is the Ras-GAP domain. A Phosphothreonine modification is found at threonine 620. Residue serine 663 is modified to Phosphoserine. Disordered stretches follow at residues 684 to 704 (ASSQ…LPNG), 751 to 782 (ETQS…LSFQ), 803 to 869 (SLEN…GQAQ), 910 to 953 (EPVQ…SATM), and 1116 to 1139 (NGIS…NSSC). Polar residues-rich tracts occupy residues 751–760 (ETQSTPQSAP) and 803–818 (SLEN…QSNS). Positions 833-855 (DFTKRSTQSEDFSRRHTVPDRHI) are enriched in basic and acidic residues. Phosphoserine is present on serine 864. Residues 916–928 (SRSRQQSSSSRES) show a composition bias toward low complexity.

As to quaternary structure, interacts with PEAK1.

Functionally, inhibitory regulator of the Ras-cyclic AMP pathway. This chain is Ras GTPase-activating protein nGAP (RASAL2), found in Homo sapiens (Human).